A 483-amino-acid chain; its full sequence is UDP-N-acetylmuramate--L-alanine ligase (483 aa).

Residue 128-134 (GTHGKTT) participates in ATP binding.

Belongs to the MurCDEF family.

It is found in the cytoplasm. It catalyses the reaction UDP-N-acetyl-alpha-D-muramate + L-alanine + ATP = UDP-N-acetyl-alpha-D-muramoyl-L-alanine + ADP + phosphate + H(+). It functions in the pathway cell wall biogenesis; peptidoglycan biosynthesis. Functionally, cell wall formation. In Shewanella violacea (strain JCM 10179 / CIP 106290 / LMG 19151 / DSS12), this protein is UDP-N-acetylmuramate--L-alanine ligase.